The primary structure comprises 249 residues: tRNA pseudouridine synthase A (249 aa).

Aspartate 53 acts as the Nucleophile in catalysis. Tyrosine 111 lines the substrate pocket.

The protein belongs to the tRNA pseudouridine synthase TruA family. In terms of assembly, homodimer.

The catalysed reaction is uridine(38/39/40) in tRNA = pseudouridine(38/39/40) in tRNA. Formation of pseudouridine at positions 38, 39 and 40 in the anticodon stem and loop of transfer RNAs. The chain is tRNA pseudouridine synthase A from Streptococcus pyogenes serotype M1.